The primary structure comprises 592 residues: Cell division protein FtsZ (592 aa).

Residues 24–28, 111–113, E142, R146, and D190 each bind GTP; these read GGGGN and GTG. A disordered region spans residues 333-362; the sequence is KFQKSVSSVRKNDSGINQTASHPQSSQLRS.

This sequence belongs to the FtsZ family. As to quaternary structure, homodimer. Polymerizes to form a dynamic ring structure in a strictly GTP-dependent manner. Interacts directly with several other division proteins.

Its subcellular location is the cytoplasm. Functionally, essential cell division protein that forms a contractile ring structure (Z ring) at the future cell division site. The regulation of the ring assembly controls the timing and the location of cell division. One of the functions of the FtsZ ring is to recruit other cell division proteins to the septum to produce a new cell wall between the dividing cells. Binds GTP and shows GTPase activity. The polypeptide is Cell division protein FtsZ (Bartonella bacilliformis).